The following is a 126-amino-acid chain: Large ribosomal subunit protein bL12 (126 aa).

It belongs to the bacterial ribosomal protein bL12 family. Homodimer. Part of the ribosomal stalk of the 50S ribosomal subunit. Forms a multimeric L10(L12)X complex, where L10 forms an elongated spine to which 2 to 4 L12 dimers bind in a sequential fashion. Binds GTP-bound translation factors.

Forms part of the ribosomal stalk which helps the ribosome interact with GTP-bound translation factors. Is thus essential for accurate translation. This is Large ribosomal subunit protein bL12 from Trichlorobacter lovleyi (strain ATCC BAA-1151 / DSM 17278 / SZ) (Geobacter lovleyi).